The chain runs to 233 residues: Superoxide dismutase [Mn] 3.4, mitochondrial (233 aa).

Residues 1 to 29 (MALRTLASKNALSFALGGAARPSAASARG) constitute a mitochondrion transit peptide. Residues His-57, His-105, Asp-194, and His-198 each contribute to the Mn(2+) site.

Belongs to the iron/manganese superoxide dismutase family. Homotetramer. Mn(2+) is required as a cofactor.

It localises to the mitochondrion matrix. The catalysed reaction is 2 superoxide + 2 H(+) = H2O2 + O2. Its function is as follows. Destroys superoxide anion radicals which are normally produced within the cells and which are toxic to biological systems. This is Superoxide dismutase [Mn] 3.4, mitochondrial (SODA.3) from Zea mays (Maize).